Here is a 173-residue protein sequence, read N- to C-terminus: MAIILGIDPGSRITGYGVIRQTGRQLTYLGSGCIRTSVTDLPSRLKLIYAGVSEIITQFQPEYFAIEQVFMAKNADSALKLGQARGAAIVAAVNQDLPVFEYAARQVKQTVVGIGSAEKSQVQHMVRTLLKLPANPQADAADALAIAITHCHLSQNVTRLGEGNLNLARGRLR.

Residues Asp8, Glu67, and Asp139 contribute to the active site. Residues Asp8, Glu67, and Asp139 each coordinate Mg(2+).

The protein belongs to the RuvC family. Homodimer which binds Holliday junction (HJ) DNA. The HJ becomes 2-fold symmetrical on binding to RuvC with unstacked arms; it has a different conformation from HJ DNA in complex with RuvA. In the full resolvosome a probable DNA-RuvA(4)-RuvB(12)-RuvC(2) complex forms which resolves the HJ. The cofactor is Mg(2+).

It is found in the cytoplasm. The enzyme catalyses Endonucleolytic cleavage at a junction such as a reciprocal single-stranded crossover between two homologous DNA duplexes (Holliday junction).. In terms of biological role, the RuvA-RuvB-RuvC complex processes Holliday junction (HJ) DNA during genetic recombination and DNA repair. Endonuclease that resolves HJ intermediates. Cleaves cruciform DNA by making single-stranded nicks across the HJ at symmetrical positions within the homologous arms, yielding a 5'-phosphate and a 3'-hydroxyl group; requires a central core of homology in the junction. The consensus cleavage sequence is 5'-(A/T)TT(C/G)-3'. Cleavage occurs on the 3'-side of the TT dinucleotide at the point of strand exchange. HJ branch migration catalyzed by RuvA-RuvB allows RuvC to scan DNA until it finds its consensus sequence, where it cleaves and resolves the cruciform DNA. This is Crossover junction endodeoxyribonuclease RuvC from Erwinia tasmaniensis (strain DSM 17950 / CFBP 7177 / CIP 109463 / NCPPB 4357 / Et1/99).